Here is a 373-residue protein sequence, read N- to C-terminus: Dual-specificity RNA methyltransferase RlmN (373 aa).

Glu-94 functions as the Proton acceptor in the catalytic mechanism. Residues 100–339 form the Radical SAM core domain; that stretch reads EDDRATLCVS…VIVRKTRGDD (240 aa). Cys-107 and Cys-344 are joined by a disulfide. [4Fe-4S] cluster contacts are provided by Cys-114, Cys-118, and Cys-121. S-adenosyl-L-methionine-binding positions include 168–169, Ser-200, 222–224, and Asn-301; these read GE and SIH. Catalysis depends on Cys-344, which acts as the S-methylcysteine intermediate.

This sequence belongs to the radical SAM superfamily. RlmN family. [4Fe-4S] cluster is required as a cofactor.

The protein localises to the cytoplasm. It catalyses the reaction adenosine(2503) in 23S rRNA + 2 reduced [2Fe-2S]-[ferredoxin] + 2 S-adenosyl-L-methionine = 2-methyladenosine(2503) in 23S rRNA + 5'-deoxyadenosine + L-methionine + 2 oxidized [2Fe-2S]-[ferredoxin] + S-adenosyl-L-homocysteine. The enzyme catalyses adenosine(37) in tRNA + 2 reduced [2Fe-2S]-[ferredoxin] + 2 S-adenosyl-L-methionine = 2-methyladenosine(37) in tRNA + 5'-deoxyadenosine + L-methionine + 2 oxidized [2Fe-2S]-[ferredoxin] + S-adenosyl-L-homocysteine. Its function is as follows. Specifically methylates position 2 of adenine 2503 in 23S rRNA and position 2 of adenine 37 in tRNAs. m2A2503 modification seems to play a crucial role in the proofreading step occurring at the peptidyl transferase center and thus would serve to optimize ribosomal fidelity. In Shewanella pealeana (strain ATCC 700345 / ANG-SQ1), this protein is Dual-specificity RNA methyltransferase RlmN.